A 707-amino-acid polypeptide reads, in one-letter code: Zinc finger CCHC domain-containing protein 8 (707 aa).

At Ala2 the chain carries N-acetylalanine. Residues 16-44 form a disordered region; it reads FDHPEESIPKPVHTRFKDDDGDEEDENGV. Over residues 34–43 the composition is skewed to acidic residues; it reads DDGDEEDENG. Positions 45–80 form a coiled coil; the sequence is GDAELRERLRQCEETIEQLRAENQELKRKLNILTRP. The segment at 227-244 adopts a CCHC-type zinc-finger fold; the sequence is PHCFNCGSEEHQMKDCPM. RBM7 binding regions lie at residues 286 to 299 and 309 to 324; these read FKPGVISEELQDAL and FIYRMRQLGYPPGWLK. Thr342 is modified (phosphothreonine). Disordered regions lie at residues 409–518, 531–607, and 641–660; these read APGV…LTLE, LEQA…TSLC, and QKLFPADTSPSTATKIHSPI. A Glycyl lysine isopeptide (Lys-Gly) (interchain with G-Cter in SUMO2) cross-link involves residue Lys413. Over residues 456-465 the composition is skewed to low complexity; it reads SQSSESFQFQ. The segment covering 466–496 has biased composition (pro residues); that stretch reads PPLPPDTPPLPRGTPPPVFTPPLPKGTPPLT. Thr472, Thr479, and Thr485 each carry phosphothreonine. Thr492 is subject to Phosphothreonine; by GSK3. A coiled-coil region spans residues 516 to 539; it reads TLEELEEQQRRIWAALEQAESVNS. The segment covering 549–559 has biased composition (polar residues); it reads LTGNSVASSPC. Thr577 is modified (phosphothreonine). Ser598 bears the Phosphoserine mark. Residues 598–607 show a composition bias toward polar residues; the sequence is SPDSEVTSLC. Thr648 carries the post-translational modification Phosphothreonine. Residues Ser649, Ser658, and Ser695 each carry the phosphoserine modification. Residues 659 to 707 are MTREX binding; it reads PIPDMSKFATGITPFEFENMAESTGMYLRIRSLLKNSPRNQQKNKKASE.

It belongs to the ZCCHC8 family. As to quaternary structure, component of a nuclear TRAMP-like complex, an ATP-dependent exosome regulatory complex consisting of a helicase (MTREX), an oligadenylate polymerase (TENT4B or TENT4A), and a substrate specific RNA-binding factor (ZCCHC7 or ZCCHC8). Several TRAMP-like complexes exist with specific compositions and are associated with nuclear, or nucleolar RNA exosomes. Identified in the spliceosome C complex. Component of the nuclear exosome targeting (NEXT) complex composed of MTREX, ZCCHC8, and RBM7 that directs a subset of non-coding short-lived RNAs for exosomal degradation. Interacts with proteins involved in RNA processing and degradation such as MTREX and RBM7; interaction with MTREX enhances MTREX RNA helicase activity and bridges between RBM7 and MTREX. Interacts with TERC, the telomerase RNA component. Phosphorylation at Thr-492 by GSK3 is triggered in cells entering mitosis; this phosphorylation is greatly enhanced by nocodazole treatment, but reduced by lithium.

Its subcellular location is the nucleus. The protein localises to the nucleoplasm. In terms of biological role, scaffolding subunit of the trimeric nuclear exosome targeting (NEXT) complex that is involved in the surveillance and turnover of aberrant transcripts and non-coding RNAs. NEXT functions as an RNA exosome cofactor that directs a subset of non-coding short-lived RNAs for exosomal degradation. May be involved in pre-mRNA splicing. It is required for 3'-end maturation of telomerase RNA component (TERC), TERC 3'-end targeting to the nuclear RNA exosome, and for telomerase function. This chain is Zinc finger CCHC domain-containing protein 8 (ZCCHC8), found in Homo sapiens (Human).